The following is a 282-amino-acid chain: Transcription repressor MYB4 (282 aa).

HTH myb-type domains are found at residues 9–61 and 62–116; these read KAHT…INYL and RPDL…RRKL. DNA-binding regions (H-T-H motif) lie at residues 37–61 and 89–112; these read WRSL…INYL and WSLI…NTHI. Residues 119–145 form a disordered region; that stretch reads RGIDPTSHRPIQESSASQDSKPTQLEP. Over residues 130–145 the composition is skewed to polar residues; that stretch reads QESSASQDSKPTQLEP.

Interacts with BHLH12/MYC1 and BHLH42/TT8. Interacts with SAD2. Widely expressed at low level. Highly expressed in siliques. Weakly expressed in seedlings, young and mature leaves, cauline leaves, stems, flower buds and roots.

The protein localises to the nucleus. Its function is as follows. Transcription repressor involved in regulation of protection against UV. Mediates transcriptional repression of CYP73A5, the gene encoding trans-cinnamate 4-monooxygenase, thereby regulating the accumulation of the UV-protectant compound sinapoylmalate. This is Transcription repressor MYB4 (MYB4) from Arabidopsis thaliana (Mouse-ear cress).